The sequence spans 153 residues: Ribosome maturation factor RimP (153 aa).

The protein belongs to the RimP family.

It is found in the cytoplasm. Required for maturation of 30S ribosomal subunits. The chain is Ribosome maturation factor RimP from Glaesserella parasuis serovar 5 (strain SH0165) (Haemophilus parasuis).